Consider the following 131-residue polypeptide: Small ribosomal subunit protein uS8 (131 aa).

The protein belongs to the universal ribosomal protein uS8 family. As to quaternary structure, part of the 30S ribosomal subunit. Contacts proteins S5 and S12.

In terms of biological role, one of the primary rRNA binding proteins, it binds directly to 16S rRNA central domain where it helps coordinate assembly of the platform of the 30S subunit. The protein is Small ribosomal subunit protein uS8 of Chlorobaculum tepidum (strain ATCC 49652 / DSM 12025 / NBRC 103806 / TLS) (Chlorobium tepidum).